The primary structure comprises 172 residues: C-phycocyanin-2 beta subunit (172 aa).

At Asn-72 the chain carries N4-methylasparagine. (2R,3E)-phycocyanobilin contacts are provided by Cys-82 and Cys-153.

Belongs to the phycobiliprotein family. Heterodimer of an alpha and a beta subunit, which further assembles into trimers and the trimers into hexamers. In terms of processing, contains two covalently linked bilin chromophores.

Its subcellular location is the cellular thylakoid membrane. Light-harvesting photosynthetic bile pigment-protein from the phycobiliprotein complex (phycobilisome, PBS). Phycocyanin is the major phycobiliprotein in the PBS rod. The polypeptide is C-phycocyanin-2 beta subunit (cpcB2) (Pseudanabaena tenuis (strain PCC 7409)).